A 996-amino-acid chain; its full sequence is Low-density lipoprotein receptor-related protein 8 (996 aa).

Positions 1-28 (MGRPELGALRPLALLLLLLLQLQHLSAA) are cleaved as a signal peptide. Residues 29–858 (DPLPGGQGPV…GSQMGSTVTA (830 aa)) lie on the Extracellular side of the membrane. 8 LDL-receptor class A domains span residues 40-76 (ECEE…DDCP), 79-117 (TCAD…ATCS), 120-158 (ECPA…AGCP), 160-196 (LCAP…RGCS), 199-238 (ACPP…ELCG), 250-287 (ACAP…ADCS), 290-326 (PCRE…AGCL), and 330-369 (TCEG…KVCG). 30 disulfide bridges follow: C41/C53, C48/C66, C60/C75, C80/C92, C87/C105, C99/C116, C121/C135, C128/C148, C142/C157, C161/C173, C168/C186, C180/C195, C200/C213, C207/C226, C220/C237, C251/C264, C259/C277, C271/C286, C291/C303, C298/C316, C310/C325, C331/C344, C339/C357, C351/C368, C373/C384, C380/C393, C395/C407, C413/C423, C419/C432, and C434/C447. Residues W58, D61, D63, D65, D71, and E72 each coordinate Ca(2+). An N-linked (GlcNAc...) asparagine glycan is attached at N170. An EGF-like 1 domain is found at 364–408 (PQKVCGLNECLHNNGGCSHICTDLKIGFECTCPAGFQLLDQKTCG). One can recognise an EGF-like 2; calcium-binding domain in the interval 409–448 (DIDECQDPDACSQICVNYKGYFKCECHPGYEMDTLTKNCK). LDL-receptor class B repeat units follow at residues 495-541 (NRIY…DWVH), 542-584 (KHIY…DPLR), 585-628 (GFMY…DLLS), 629-671 (QRLY…AVFE), and 672-714 (DKVF…FHEL). A glycan (N-linked (GlcNAc...) asparagine) is linked at N551. The segment at 773 to 831 (STSTTTLASAMTRTVPATTRAPGTTIHDPTYQNHSTETPSQTAAAPHSVNVPRAPSTSP) is clustered O-linked oligosaccharides. A disordered region spans residues 778 to 851 (TLASAMTRTV…SQHYGNEGSQ (74 aa)). Polar residues predominate over residues 802 to 815 (TYQNHSTETPSQTA). N805 carries N-linked (GlcNAc...) asparagine glycosylation. A compositionally biased stretch (low complexity) spans 824–839 (PRAPSTSPSTPSPATS). N-linked (GlcNAc...) asparagine glycosylation is present at N840. Polar residues predominate over residues 840–851 (NHSQHYGNEGSQ). The helical transmembrane segment at 859 to 881 (AVIGVIVPIVVIALLCMSGYLIW) threads the bilayer. At 882–996 (RNWKRKNTKS…ALSLEDDGLP (115 aa)) the chain is on the cytoplasmic side.

The protein belongs to the LDLR family. In terms of assembly, homooligomer. Interacts with VLDLR. Reelin associates with two or more receptor molecules. Interacts with DAB1 and JNK-interacting proteins. Interacts with SNX17. Interacts with PCSK9. Interacts with MDK; this interaction is calcium dependent. Interacts with CLU. O-glycosylated. Some alternatively spliced isoforms lack the O-linked sugar domain. In terms of processing, undergoes sequential, furin and gamma-secretase dependent, proteolytic processing, resulting in the extracellular release of the entire ligand-binding domain as a soluble polypeptide and in the intracellular domain (ICD) release into the cytoplasm. The gamma-secretase-dependent proteolytical processing occurs after the bulk of the extracellular domain has been shed, in a furin-dependent manner, in alternatively spliced isoforms carrying the furin cleavage site. Hypoglycosylation (mainly hypo-O-glycosylation) leads to increased extracellular cleavage, which in turn results in accelerating release of the intracellular domain (ICD) by the gamma-secretase. The resulting receptor fragment is able to inhibit Reelin signaling and in particular the Reelin-induced DAB1 phosphorylation. Post-translationally, tyrosine phosphorylated upon apoE binding. Ubiquitinated by MYLIP leading to degradation. Expressed in neurons throughout the brain, with strong expression in pyramidal neurons of the hippocampus, granule cells of the dentate gyrus, cortical neurons and Purkinje cells of the cerebellum. Also expressed in the epithelium of the choroid plexus and of the blood vessels (apical expression), as well as in the epididymis.

It localises to the cell membrane. Its subcellular location is the secreted. Functionally, cell surface receptor for Reelin (RELN) and apolipoprotein E (apoE)-containing ligands. LRP8 participates in transmitting the extracellular Reelin signal to intracellular signaling processes, by binding to DAB1 on its cytoplasmic tail. Reelin acts via both the VLDL receptor (VLDLR) and LRP8 to regulate DAB1 tyrosine phosphorylation and microtubule function in neurons. LRP8 has higher affinity for Reelin than VLDLR. LRP8 is thus a key component of the Reelin pathway which governs neuronal layering of the forebrain during embryonic brain development. Binds the endoplasmic reticulum resident receptor-associated protein (RAP). Binds dimers of beta 2-glycoprotein I and may be involved in the suppression of platelet aggregation in the vasculature. Highly expressed in the initial segment of the epididymis, where it affects the functional expression of clusterin and phospholipid hydroperoxide glutathione peroxidase (PHGPx), two proteins required for sperm maturation. May also function as an endocytic receptor. Not required for endocytic uptake of SEPP1 in the kidney which is mediated by LRP2. Together with its ligand, apolipoprotein E (apoE), may indirectly play a role in the suppression of the innate immune response by controlling the survival of myeloid-derived suppressor cells. The protein is Low-density lipoprotein receptor-related protein 8 (Lrp8) of Mus musculus (Mouse).